Consider the following 360-residue polypeptide: Phospho-N-acetylmuramoyl-pentapeptide-transferase (360 aa).

A run of 10 helical transmembrane segments spans residues 27-47, 72-92, 94-114, 132-152, 168-188, 199-219, 235-255, 263-283, 288-308, and 338-358; these read IVSL…LIAW, PTMG…MWAY, SNPY…VGFI, WKYF…FAVG, IMPQ…VGTS, GLAI…AWAT, FAGE…GFLW, VFMG…IAVL, FLLL…ILQV, and VIVR…ATLK.

The protein belongs to the glycosyltransferase 4 family. MraY subfamily. The cofactor is Mg(2+).

The protein resides in the cell inner membrane. It carries out the reaction UDP-N-acetyl-alpha-D-muramoyl-L-alanyl-gamma-D-glutamyl-meso-2,6-diaminopimeloyl-D-alanyl-D-alanine + di-trans,octa-cis-undecaprenyl phosphate = di-trans,octa-cis-undecaprenyl diphospho-N-acetyl-alpha-D-muramoyl-L-alanyl-D-glutamyl-meso-2,6-diaminopimeloyl-D-alanyl-D-alanine + UMP. It functions in the pathway cell wall biogenesis; peptidoglycan biosynthesis. Functionally, catalyzes the initial step of the lipid cycle reactions in the biosynthesis of the cell wall peptidoglycan: transfers peptidoglycan precursor phospho-MurNAc-pentapeptide from UDP-MurNAc-pentapeptide onto the lipid carrier undecaprenyl phosphate, yielding undecaprenyl-pyrophosphoryl-MurNAc-pentapeptide, known as lipid I. This Sodalis glossinidius (strain morsitans) protein is Phospho-N-acetylmuramoyl-pentapeptide-transferase.